Here is a 308-residue protein sequence, read N- to C-terminus: Dioxygenase peniF (308 aa).

Fe cation contacts are provided by His-144 and His-225.

It belongs to the PhyH family. Homodimer. Requires Fe cation as cofactor.

Dioxygenase; part of the gene cluster that mediates the biosynthesis of penifulvin A, a potent insecticidal sesquiterpene that features a [5.5.5.6]dioxafenestrane ring. The first step of the pathway is performed by the sesquiterpene cyclase peniA that generates the angular triquinane scaffold silphinene via cyclization of the linear farnesyl pyrophosphate (FPP). The cytochrome P450 monooxygenase peniB and the flavin-dependent monooxygenase peniC then catalyze a series of oxidation reactions to transform silphinene into penifulvin A. The dioxygenases peniD and peniF, as well as the acetyltransferase peniE, do not seem to be involved in the biosynthesis of penifulvin A. In Penicillium patulum (Penicillium griseofulvum), this protein is Dioxygenase peniF.